The sequence spans 463 residues: T-box transcription factor TBX1-B (463 aa).

Disordered stretches follow at residues 39 to 58 and 75 to 102; these read SPSP…PCSA and GASS…APVK. Low complexity predominate over residues 75 to 96; sequence GASSSSCASSTPGSGSTGSSSG. The segment at residues 119 to 297 is a DNA-binding region (T-box); it reads LWDEFNQLGT…SNPFAKGFRD (179 aa). Disordered regions lie at residues 320-343 and 367-406; these read RSRN…RREY and SPSL…HHHP. Residues 323-332 are compositionally biased toward polar residues; that stretch reads NPVSSPPQNG. The span at 333–343 shows a compositional bias: basic and acidic residues; that stretch reads SDKDGDGRREY. Over residues 367-380 the composition is skewed to low complexity; that stretch reads SPSLPVPGGLVPLS. Positions 420–431 match the Nuclear localization signal motif; that stretch reads KTRPAPYPLPSI.

In terms of assembly, binds DNA as a dimer. Interacts with dscr6/ripply3.

It is found in the nucleus. Probable transcriptional regulator involved in developmental processes. Binds to the palindromic T site 5'-TTCACACCTAGGTGTGAA-3' DNA sequence. Induces pre-placodal ectoderm (PPE) gene expression in regions where RIPPLY3 is absent. Plays a role in the formation of the anteroposterior (AP) axis during embryonic development; required to establish the posterolateral border of the pre-placodal ectoderm (PPE) acting downstream of the retinoic acid receptor (RAR) signaling. Functionally, probable transcriptional regulator involved in developmental processes. Binds to the palindromic T site 5'-TTCACACCTAGGTGTGAA-3' DNA sequence. Is required for normal development of the pharyngeal arch arteries. The chain is T-box transcription factor TBX1-B (tbx1-b) from Xenopus laevis (African clawed frog).